The sequence spans 105 residues: Large ribosomal subunit protein uL24 (105 aa).

The protein belongs to the universal ribosomal protein uL24 family. As to quaternary structure, part of the 50S ribosomal subunit.

One of two assembly initiator proteins, it binds directly to the 5'-end of the 23S rRNA, where it nucleates assembly of the 50S subunit. In terms of biological role, one of the proteins that surrounds the polypeptide exit tunnel on the outside of the subunit. The polypeptide is Large ribosomal subunit protein uL24 (Dictyoglomus turgidum (strain DSM 6724 / Z-1310)).